Here is a 410-residue protein sequence, read N- to C-terminus: MNQQLKNLTLPIYMDYQSTTPIDPRVMEAMLPYFTTKFGNPHSRSHSFGWEAENAVENARSMIAKLIGADSKEIIFTSGATESNNLVIKGIAKFYGNKKNHIITLVSEHKCVLNACRYLEQEGIKITYLPIKPNGIIDLEILKNAITDQTLLVSVMAVNNEIGVIQPLREIGKICRERSVFFHSDIAQGFGKIPINVNEYNIDLASISGHKIYGPKGIGALYIRKKPRVRVTPLINGGGQERGMRSGTLPTPLIVGFGIAAEISYNEMEKDAQHVNYLFDRFLNNIYSRIPEVYLNGDKDQRYKGNLNLSFAGVEGESIILAIKDLAVSSGSACTSASLEPSYVLRSIGISEELAHTSIRFGIGRFTTEQEIDYAVNLICSKIDKLRKLSPLWEMMQEGIDLKKIKWTAH.

Pyridoxal 5'-phosphate contacts are provided by residues 80–81, Asn160, Gln188, and 208–210; these read AT and SGH. N6-(pyridoxal phosphate)lysine is present on Lys211. Pyridoxal 5'-phosphate is bound at residue Thr248. Catalysis depends on Cys334, which acts as the Cysteine persulfide intermediate. Cys334 lines the [2Fe-2S] cluster pocket.

This sequence belongs to the class-V pyridoxal-phosphate-dependent aminotransferase family. NifS/IscS subfamily. In terms of assembly, homodimer. Forms a heterotetramer with IscU, interacts with other sulfur acceptors. The cofactor is pyridoxal 5'-phosphate.

It is found in the cytoplasm. The catalysed reaction is (sulfur carrier)-H + L-cysteine = (sulfur carrier)-SH + L-alanine. It participates in cofactor biosynthesis; iron-sulfur cluster biosynthesis. In terms of biological role, master enzyme that delivers sulfur to a number of partners involved in Fe-S cluster assembly, tRNA modification or cofactor biosynthesis. Catalyzes the removal of elemental sulfur atoms from cysteine to produce alanine. Functions as a sulfur delivery protein for Fe-S cluster synthesis onto IscU, an Fe-S scaffold assembly protein, as well as other S acceptor proteins. The sequence is that of Cysteine desulfurase IscS from Rickettsia typhi (strain ATCC VR-144 / Wilmington).